The primary structure comprises 673 residues: Potassium-transporting ATPase ATP-binding subunit (673 aa).

4 consecutive transmembrane segments (helical) span residues 34–54 (IMFVVEVGMLLALGLTIYPDL), 65–85 (VFSIFIILLLTLVFANFSEAL), 216–236 (IALFTLLMTLTIIFLVVILTM), and 253–273 (IALAVCLIPTTIGGLLSAIGI). Aspartate 304 acts as the 4-aspartylphosphate intermediate in catalysis. ATP-binding positions include aspartate 341, glutamate 345, 370-377 (FTAETRMS), and lysine 388. Mg(2+) is bound by residues aspartate 511 and aspartate 515. Helical transmembrane passes span 581-601 (FAILPAMFMAAMPAMNHLNIM), 609-629 (AVLSALIFNALIIVLLIPIAM), and 649-669 (VYGLGGMIVPFIGIKLIDLII).

It belongs to the cation transport ATPase (P-type) (TC 3.A.3) family. Type IA subfamily. As to quaternary structure, the system is composed of three essential subunits: KdpA, KdpB and KdpC.

It is found in the cell membrane. It catalyses the reaction K(+)(out) + ATP + H2O = K(+)(in) + ADP + phosphate + H(+). Functionally, part of the high-affinity ATP-driven potassium transport (or Kdp) system, which catalyzes the hydrolysis of ATP coupled with the electrogenic transport of potassium into the cytoplasm. This subunit is responsible for energy coupling to the transport system and for the release of the potassium ions to the cytoplasm. The chain is Potassium-transporting ATPase ATP-binding subunit from Staphylococcus epidermidis (strain ATCC 35984 / DSM 28319 / BCRC 17069 / CCUG 31568 / BM 3577 / RP62A).